The primary structure comprises 888 residues: Alanine--tRNA ligase (888 aa).

Residues H573, H577, C676, and H680 each coordinate Zn(2+).

Belongs to the class-II aminoacyl-tRNA synthetase family. Zn(2+) is required as a cofactor.

Its subcellular location is the cytoplasm. It carries out the reaction tRNA(Ala) + L-alanine + ATP = L-alanyl-tRNA(Ala) + AMP + diphosphate. Its function is as follows. Catalyzes the attachment of alanine to tRNA(Ala) in a two-step reaction: alanine is first activated by ATP to form Ala-AMP and then transferred to the acceptor end of tRNA(Ala). Also edits incorrectly charged Ser-tRNA(Ala) and Gly-tRNA(Ala) via its editing domain. The polypeptide is Alanine--tRNA ligase (Corynebacterium glutamicum (strain R)).